Reading from the N-terminus, the 697-residue chain is Tryptophan synthase (697 aa).

Residues 1 to 298 are tryptophan synthase alpha chain; it reads MTEQIKKTFL…AVVEPINEMY (298 aa). Residues glutamate 50 and aspartate 61 each act as proton acceptor in the active site. The segment at 298-697 is tryptophan synthase beta chain; the sequence is YLPQKYGMFG…GPKIGWDLRF (400 aa). Lysine 381 is subject to N6-(pyridoxal phosphate)lysine.

This sequence in the N-terminal section; belongs to the TrpA family. It in the C-terminal section; belongs to the TrpB family. Pyridoxal 5'-phosphate is required as a cofactor.

The enzyme catalyses (1S,2R)-1-C-(indol-3-yl)glycerol 3-phosphate + L-serine = D-glyceraldehyde 3-phosphate + L-tryptophan + H2O. The protein operates within amino-acid biosynthesis; L-tryptophan biosynthesis; L-tryptophan from chorismate: step 5/5. The polypeptide is Tryptophan synthase (trp2) (Schizosaccharomyces pombe (strain 972 / ATCC 24843) (Fission yeast)).